We begin with the raw amino-acid sequence, 860 residues long: Leucine--tRNA ligase (860 aa).

The 'HIGH' region motif lies at 42 to 52 (PYPSGRLHMGH). The short motif at 619 to 623 (KMSKS) is the 'KMSKS' region element. Residue Lys622 coordinates ATP.

This sequence belongs to the class-I aminoacyl-tRNA synthetase family.

The protein localises to the cytoplasm. The enzyme catalyses tRNA(Leu) + L-leucine + ATP = L-leucyl-tRNA(Leu) + AMP + diphosphate. In Histophilus somni (strain 2336) (Haemophilus somnus), this protein is Leucine--tRNA ligase.